We begin with the raw amino-acid sequence, 418 residues long: MIHSLFLINCSGDIFLEKHWKSVVSQSVCDYFFEAQEKAIDVENVPPVISTPLHYLISIYRDKIFFVSVIQTEVPPLFVIEFLHRVADTFQDYFGECSETAIKDNVVIVYELLEEMLDNGFPLATESNILKELIKPPTILRSVVNSITGSSNVGDTLPTGQLSNIPWRRAGVKYTNNEAYFDVIEEIDAIIDKSGSTVFAEIQGVIDSCIKLSGMPDLSLSFMNPRLLDDVSFHPCIRFKRWESERVLSFIPPDGNFRLISYRVSSQNLVAIPVYVKHLISFKENSSSGRFDVTIGPKQNMGKTVEGVVMTVHMPKAVLNMNLTATQGSYTFDPVTKVLAWDVGKITPQKLPNLKGIVNLQSGAPKPEENPSLNIQFKIQQLAISGLKVNRLDMYGEKYKPFKGVKYITKAGKFQVRT.

Residues Asn176 to Arg417 enclose the MHD domain.

This sequence belongs to the adaptor complexes medium subunit family. As to quaternary structure, the AP-3 complex associates with the BLOC-1 complex.

Its subcellular location is the golgi apparatus. It is found in the cytoplasmic vesicle membrane. In terms of biological role, part of the AP-3 complex, an adaptor-related complex which is not clathrin-associated. The complex is associated with the Golgi region as well as more peripheral structures. It facilitates the budding of vesicles from the Golgi membrane and may be directly involved in trafficking to lysosomes. In concert with the BLOC-1 complex, AP-3 is required to target cargos into vesicles assembled at cell bodies for delivery into neurites and nerve terminals. This is AP-3 complex subunit mu-1 (AP3M1) from Gallus gallus (Chicken).